A 56-amino-acid polypeptide reads, in one-letter code: MAVQKSKKSRSMRGMRRSHDALTTAALSVDATSGETHLRHNVTAEGFYRGKKVINK.

The span at 1–16 shows a compositional bias: basic residues; the sequence is MAVQKSKKSRSMRGMR. The interval 1 to 21 is disordered; it reads MAVQKSKKSRSMRGMRRSHDA.

It belongs to the bacterial ribosomal protein bL32 family.

The polypeptide is Large ribosomal subunit protein bL32 (Vibrio atlanticus (strain LGP32) (Vibrio splendidus (strain Mel32))).